The chain runs to 103 residues: Large ribosomal subunit protein bL21 (103 aa).

Belongs to the bacterial ribosomal protein bL21 family. In terms of assembly, part of the 50S ribosomal subunit. Contacts protein L20.

In terms of biological role, this protein binds to 23S rRNA in the presence of protein L20. This is Large ribosomal subunit protein bL21 from Brevibacillus brevis (strain 47 / JCM 6285 / NBRC 100599).